The following is a 344-amino-acid chain: tRNA N6-adenosine threonylcarbamoyltransferase (344 aa).

Fe cation is bound by residues histidine 112 and histidine 116. Substrate is bound by residues 134–138, aspartate 167, glycine 180, and asparagine 280; that span reads LASGG. Aspartate 308 contributes to the Fe cation binding site.

It belongs to the KAE1 / TsaD family. The cofactor is Fe(2+).

It is found in the cytoplasm. It catalyses the reaction L-threonylcarbamoyladenylate + adenosine(37) in tRNA = N(6)-L-threonylcarbamoyladenosine(37) in tRNA + AMP + H(+). In terms of biological role, required for the formation of a threonylcarbamoyl group on adenosine at position 37 (t(6)A37) in tRNAs that read codons beginning with adenine. Is involved in the transfer of the threonylcarbamoyl moiety of threonylcarbamoyl-AMP (TC-AMP) to the N6 group of A37, together with TsaE and TsaB. TsaD likely plays a direct catalytic role in this reaction. This is tRNA N6-adenosine threonylcarbamoyltransferase from Rickettsia peacockii (strain Rustic).